The primary structure comprises 124 residues: Small ribosomal subunit protein uS12 (124 aa).

The disordered stretch occupies residues 1-29 (MPTINQLVRRPRRPRESANKAPALQHNPQ). Residue Asp90 is modified to 3-methylthioaspartic acid.

The protein belongs to the universal ribosomal protein uS12 family. Part of the 30S ribosomal subunit. Contacts proteins S8 and S17. May interact with IF1 in the 30S initiation complex.

In terms of biological role, with S4 and S5 plays an important role in translational accuracy. Interacts with and stabilizes bases of the 16S rRNA that are involved in tRNA selection in the A site and with the mRNA backbone. Located at the interface of the 30S and 50S subunits, it traverses the body of the 30S subunit contacting proteins on the other side and probably holding the rRNA structure together. The combined cluster of proteins S8, S12 and S17 appears to hold together the shoulder and platform of the 30S subunit. The sequence is that of Small ribosomal subunit protein uS12 from Anaplasma marginale (strain Florida).